Reading from the N-terminus, the 295-residue chain is Trimeric intracellular cation channel type A (295 aa).

Residues 1 to 11 are Lumenal-facing; the sequence is MELLSALSLDD. A helical transmembrane segment spans residues 12 to 32; sequence LAVAFSKLPVFPLFDVAYYII. Topologically, residues 33-51 are cytoplasmic; sequence SILYLKYEPGAVDLSKRSP. A helical transmembrane segment spans residues 52–72; it reads VASWLCAMLYCFGSYILADVL. The Lumenal portion of the chain corresponds to 73–84; the sequence is LGESPIHYFSNN. Gly74 serves as a coordination point for Ca(2+). Residues 85–105 form a helical membrane-spanning segment; sequence ANILLASAVWYLTFFCPLNIF. The Cytoplasmic segment spans residues 106 to 144; sequence YKIVSFLPLKLVLVGMKEVVRVRKIAMGIHHAHHHYHHG. Lys122 and Arg126 together coordinate a 1,2-diacyl-sn-glycero-3-phospho-(1D-myo-inositol-4,5-bisphosphate). A helical membrane pass occupies residues 145 to 165; it reads WVIMVLIGWVKGSGVALMSNL. The Lumenal portion of the chain corresponds to 166–178; that stretch reads EQLLRGVWKPETN. A helical membrane pass occupies residues 179–199; the sequence is EILHMSFPTKASLYGAILFTL. Residues 200–201 lie on the Cytoplasmic side of the membrane; that stretch reads QQ. The helical transmembrane segment at 202–222 threads the bilayer; the sequence is AHWLPISKAYLIFFFTLFMAI. The Lumenal segment spans residues 223–233; it reads CKIYMTATHSH. A helical transmembrane segment spans residues 234-254; sequence GSPFAIFESGICCVLFGAANG. Residues 255–295 lie on the Cytoplasmic side of the membrane; it reads DHDDHGDHHHHHDDHDVSHSTVKSKEELNEGTRKRKTKKAE. Positions 259 to 286 are enriched in basic and acidic residues; sequence HGDHHHHHDDHDVSHSTVKSKEELNEGT. The segment at 259–295 is disordered; the sequence is HGDHHHHHDDHDVSHSTVKSKEELNEGTRKRKTKKAE.

The protein belongs to the TMEM38 family. In terms of assembly, homotrimer; conformation seems to be controled by binding to diacylglycerol (DAG).

The protein localises to the sarcoplasmic reticulum membrane. It localises to the nucleus membrane. The enzyme catalyses K(+)(in) = K(+)(out). Its activity is regulated as follows. Channel activity is activated by a change of voltage within the sarcoplasmic reticulum lumen and blocked by luminal high Ca(2+) levels. Intracellular monovalent cation channel required for maintenance of rapid intracellular calcium release. Acts as a potassium counter-ion channel that functions in synchronization with calcium release from intracellular stores. Opened by a change of voltage within the sarcoplasmic reticulum lumen. The chain is Trimeric intracellular cation channel type A (tmem38a) from Xenopus tropicalis (Western clawed frog).